The following is a 103-amino-acid chain: Small ribosomal subunit protein uS10 (103 aa).

Belongs to the universal ribosomal protein uS10 family. As to quaternary structure, part of the 30S ribosomal subunit.

Involved in the binding of tRNA to the ribosomes. In Thioalkalivibrio sulfidiphilus (strain HL-EbGR7), this protein is Small ribosomal subunit protein uS10.